A 195-amino-acid polypeptide reads, in one-letter code: Keratin-associated protein 4-11 (195 aa).

A run of 27 repeats spans residues 5 to 9 (CCGSV), 24 to 28 (CCRPS), 29 to 33 (CCETT), 34 to 38 (CCRTT), 44 to 48 (CCVSS), 49 to 53 (CCRPQ), 54 to 58 (CCQSV), 59 to 63 (CCQPT), 64 to 68 (CCRPR), 69 to 73 (CCISS), 74 to 78 (CCRPS), 79 to 83 (CCVSS), 84 to 88 (CCKPQ), 89 to 93 (CCQSM), 94 to 98 (CCQPT), 99 to 103 (CCRPR), 104 to 108 (CCISS), 109 to 113 (CCRPS), 114 to 118 (CCVSS), 119 to 123 (CCRPQ), 124 to 128 (CCQSV), 129 to 133 (CCQPT), 134 to 138 (CCHPS), 144 to 148 (CCRPS), 149 to 153 (CCESS), 154 to 158 (CCRPC), and 159 to 163 (CCLRP). The segment at 5-163 (CCGSVCSHQG…CCRPCCCLRP (159 aa)) is 27 X 5 AA repeats of C-C-[GIKRQVHEL]-[SPTR]-[STVQRMC].

This sequence belongs to the KRTAP type 4 family. As to quaternary structure, interacts with hair keratins. As to expression, expressed in the hair follicles.

Functionally, in the hair cortex, hair keratin intermediate filaments are embedded in an interfilamentous matrix, consisting of hair keratin-associated proteins (KRTAP), which are essential for the formation of a rigid and resistant hair shaft through their extensive disulfide bond cross-linking with abundant cysteine residues of hair keratins. The matrix proteins include the high-sulfur and high-glycine-tyrosine keratins. In Homo sapiens (Human), this protein is Keratin-associated protein 4-11 (KRTAP4-11).